A 259-amino-acid chain; its full sequence is Snake venom serine protease homolog rhinocerase 2 (259 aa).

An N-terminal signal peptide occupies residues 1-17 (VLIRVLANLLLLQLSYA). A propeptide spanning residues 18–23 (QESSEL) is cleaved from the precursor. The 227-residue stretch at 24–250 (VIGGDECDIN…YTDWIEGIIA (227 aa)) folds into the Peptidase S1 domain. 6 disulfides stabilise this stretch: Cys30–Cys164, Cys51–Cys67, Cys99–Cys257, Cys143–Cys211, Cys175–Cys190, and Cys201–Cys226. Asn252 carries N-linked (GlcNAc...) asparagine glycosylation.

This sequence belongs to the peptidase S1 family. Snake venom subfamily. In terms of tissue distribution, expressed by the venom gland.

It is found in the secreted. Its function is as follows. Snake venom serine protease homolog that may act in the hemostasis system of the prey. The polypeptide is Snake venom serine protease homolog rhinocerase 2 (Bitis rhinoceros (West African gaboon viper)).